A 577-amino-acid chain; its full sequence is Protein NRT1/ PTR FAMILY 6.2 (577 aa).

The next 12 membrane-spanning stretches (helical) occupy residues 28 to 48, 74 to 94, 96 to 116, 134 to 154, 183 to 203, 214 to 234, 332 to 352, 369 to 389, 409 to 429, 447 to 467, 488 to 508, and 535 to 555; these read WITAALILGIEVVERLSTMGI, FMGTSFLLCLLGGFLADSFLG, FKTIGIFSTIQALGTGALAVA, IPATAFQMTILYVSLYLIALG, FFFNRFFFFISMGTLLAVTVL, WAYGICTVSMAIAIVIFLCGT, LLPIWATTIIFWTTYAQMITF, IPAGSLTVFFVAAILITLAVY, LQRIAIGLVLSTAGMAAAALV, ISVFLLVPQFFLVGAGEAFIY, GLFLTTLSLGFFVSSFLVSIV, and WLLVILSGINFVVYIICALWF.

It belongs to the major facilitator superfamily. Proton-dependent oligopeptide transporter (POT/PTR) (TC 2.A.17) family. As to expression, expressed in shoots, leaves, flowers and siliques. Expressed in leaf petiole.

The protein resides in the membrane. Its function is as follows. Low-affinity proton-dependent nitrate transporter. Not involved in dipeptides transport. The sequence is that of Protein NRT1/ PTR FAMILY 6.2 (NPF6.2) from Arabidopsis thaliana (Mouse-ear cress).